Here is a 260-residue protein sequence, read N- to C-terminus: Phosphatidate cytidylyltransferase (260 aa).

7 consecutive transmembrane segments (helical) span residues 9 to 29, 46 to 66, 70 to 90, 102 to 122, 130 to 150, 172 to 192, and 196 to 216; these read IIAL…LMLF, MIKF…IIML, AGEW…FIVL, FMDA…FMYF, LRYI…AYIF, FFGG…FVDL, and IWLL…GDLV.

The protein belongs to the CDS family.

It localises to the cell membrane. It carries out the reaction a 1,2-diacyl-sn-glycero-3-phosphate + CTP + H(+) = a CDP-1,2-diacyl-sn-glycerol + diphosphate. Its pathway is phospholipid metabolism; CDP-diacylglycerol biosynthesis; CDP-diacylglycerol from sn-glycerol 3-phosphate: step 3/3. This is Phosphatidate cytidylyltransferase (cdsA) from Staphylococcus epidermidis (strain ATCC 35984 / DSM 28319 / BCRC 17069 / CCUG 31568 / BM 3577 / RP62A).